We begin with the raw amino-acid sequence, 1827 residues long: Laminin subunit beta-4 (1827 aa).

An N-terminal signal peptide occupies residues 1–21 (MLLRLELSALLLLLIAAPVRL). A Laminin N-terminal domain is found at 26–266 (VGNSCYPNLG…ALYEMVVRGS (241 aa)). A glycan (N-linked (GlcNAc...) asparagine) is linked at N231. Disulfide bonds link C267-C276, C269-C297, C299-C308, C311-C331, C334-C343, C336-C361, C364-C373, C376-C394, C397-C410, C399-C417, C419-C428, C431-C446, C449-C463, C451-C470, C472-C481, C484-C498, C501-C513, C503-C520, and C522-C531. Laminin EGF-like domains follow at residues 267–333 (CFCN…VCKR), 334–396 (CNCH…ACIP), 397–448 (CDCD…GCQL), and 449–500 (CRCN…GCIP). One can recognise a Laminin EGF-like 5; truncated domain in the interval 501–544 (CDCDIGGALKTECSSVDGQCKCRPNMVGQKCNDPAPGYFLAPLD). One can recognise a Laminin IV type B domain in the interval 540–847 (LAPLDFYIYE…LIGSMSAFIH (308 aa)). Cystine bridges form between C853/C865, C855/C872, C874/C883, C886/C898, C901/C913, C903/C920, C922/C931, C934/C944, C947/C956, C949/C963, C966/C975, C978/C992, C995/C1011, C997/C1022, C1024/C1033, C1036/C1051, C1054/C1068, C1056/C1075, C1078/C1087, C1090/C1103, C1106/C1126, C1108/C1133, C1135/C1144, C1147/C1160, C1163/C1175, C1165/C1182, C1184/C1193, C1196/C1208, C1211/C1223, C1213/C1230, C1232/C1241, and C1244/C1255. Laminin EGF-like domains follow at residues 853–900 (CNCH…GCSP), 901–946 (CDCD…LCRR), 947–994 (CQCN…PCEP), 995–1053 (CLCP…RCKE), 1054–1105 (CCCN…DCKE), 1106–1162 (CSCD…GCQP), 1163–1210 (CNCN…QCMF), and 1211–1257 (CDCN…ACEP). The N-linked (GlcNAc...) asparagine glycan is linked to N1001. The segment at 1258 to 1449 (CHACNHLWEK…LSAANINEEV (192 aa)) is domain II. Coiled-coil stretches lie at residues 1294 to 1335 (ELQH…EIID) and 1385 to 1449 (NKIK…NEEV). N1329 is a glycosylation site (N-linked (GlcNAc...) asparagine). The segment at 1450–1476 (CGAPGDAECEKAKCGGALCGKCGGPDC) is domain alpha. The interval 1477 to 1827 (TGSLPISLNA…KVQRYNLCSP (351 aa)) is domain I. N1485, N1496, N1513, N1533, N1599, N1629, N1644, N1672, N1686, N1702, N1726, N1745, N1750, and N1761 each carry an N-linked (GlcNAc...) asparagine glycan. 2 coiled-coil regions span residues 1485-1554 (NASK…EKVK) and 1584-1820 (DEIK…DKVQ).

As to quaternary structure, laminin is a complex glycoprotein, consisting of three different polypeptide chains (alpha, beta, gamma), which are bound to each other by disulfide bonds into a cross-shaped molecule comprising one long and three short arms with globules at each end.

It is found in the secreted. It localises to the extracellular space. Its subcellular location is the extracellular matrix. The protein localises to the basement membrane. Functionally, binding to cells via a high affinity receptor, laminin is thought to mediate the attachment, migration and organization of cells into tissues during embryonic development by interacting with other extracellular matrix components. Positively regulates apical-basal distribution of Muller glia cells in the retina. This chain is Laminin subunit beta-4 (lamb4), found in Danio rerio (Zebrafish).